Consider the following 126-residue polypeptide: Thioredoxin-like 3-3 (126 aa).

The tract at residues 1 to 24 is disordered; the sequence is MRKQESEGANLEFESKSNDNGNVK. The region spanning 5-126 is the Thioredoxin domain; sequence ESEGANLEFE…RLHDRLWLHS (122 aa). Residues Cys55 and Cys58 each act as nucleophile in the active site. Cys55 and Cys58 are oxidised to a cystine.

This sequence belongs to the thioredoxin family.

Its function is as follows. Probable thiol-disulfide oxidoreductase that may participate in various redox reactions. This Arabidopsis thaliana (Mouse-ear cress) protein is Thioredoxin-like 3-3.